The following is a 195-amino-acid chain: Guanylate kinase (195 aa).

The Guanylate kinase-like domain maps to 12–191; that stretch reads GLIILISGPS…TIEDIKQLIL (180 aa). Residue 19-26 coordinates ATP; that stretch reads GPSGVGKG.

This sequence belongs to the guanylate kinase family.

The protein resides in the cytoplasm. It carries out the reaction GMP + ATP = GDP + ADP. Its function is as follows. Essential for recycling GMP and indirectly, cGMP. The sequence is that of Guanylate kinase (gmk) from Mycoplasmoides gallisepticum (strain R(low / passage 15 / clone 2)) (Mycoplasma gallisepticum).